Consider the following 481-residue polypeptide: Ribulose bisphosphate carboxylase large chain (481 aa).

Positions 1–2 (MS) are excised as a propeptide. N-acetylproline is present on proline 3. At lysine 14 the chain carries N6,N6,N6-trimethyllysine. Positions 123 and 173 each coordinate substrate. Residue lysine 175 is the Proton acceptor of the active site. Lysine 177 serves as a coordination point for substrate. Mg(2+) is bound by residues lysine 201, aspartate 203, and glutamate 204. Lysine 201 bears the N6-carboxylysine mark. Histidine 294 acts as the Proton acceptor in catalysis. Arginine 295, histidine 327, and serine 379 together coordinate substrate.

It belongs to the RuBisCO large chain family. Type I subfamily. In terms of assembly, heterohexadecamer of 8 large chains and 8 small chains; disulfide-linked. The disulfide link is formed within the large subunit homodimers. Mg(2+) serves as cofactor. In terms of processing, the disulfide bond which can form in the large chain dimeric partners within the hexadecamer appears to be associated with oxidative stress and protein turnover.

The protein resides in the plastid. The enzyme catalyses 2 (2R)-3-phosphoglycerate + 2 H(+) = D-ribulose 1,5-bisphosphate + CO2 + H2O. It carries out the reaction D-ribulose 1,5-bisphosphate + O2 = 2-phosphoglycolate + (2R)-3-phosphoglycerate + 2 H(+). RuBisCO catalyzes two reactions: the carboxylation of D-ribulose 1,5-bisphosphate, the primary event in carbon dioxide fixation, as well as the oxidative fragmentation of the pentose substrate in the photorespiration process. Both reactions occur simultaneously and in competition at the same active site. This is Ribulose bisphosphate carboxylase large chain from Cuscuta sandwichiana (Kauna'oa).